A 142-amino-acid chain; its full sequence is Hemoglobin subunit alpha-A (142 aa).

The Globin domain occupies V2 to R142. O2 is bound at residue H59. Heme b is bound at residue H88.

The protein belongs to the globin family. In terms of assembly, heterotetramer of two alpha chains and two beta chains. Red blood cells.

Involved in oxygen transport from the lung to the various peripheral tissues. The protein is Hemoglobin subunit alpha-A (HBAA) of Meleagris gallopavo (Wild turkey).